A 106-amino-acid chain; its full sequence is ATP-dependent Clp protease adapter protein ClpS (106 aa).

The segment covering 1–13 has biased composition (basic and acidic residues); that stretch reads MPRKTSHEHDHGL. Residues 1–21 are disordered; sequence MPRKTSHEHDHGLVVETSKPE.

Belongs to the ClpS family. In terms of assembly, binds to the N-terminal domain of the chaperone ClpA.

Its function is as follows. Involved in the modulation of the specificity of the ClpAP-mediated ATP-dependent protein degradation. This Xanthomonas campestris pv. campestris (strain 8004) protein is ATP-dependent Clp protease adapter protein ClpS.